A 400-amino-acid polypeptide reads, in one-letter code: Argininosuccinate synthase (400 aa).

An ATP-binding site is contributed by 8-16; it reads AYSGGLDTS. Y87 is a binding site for L-citrulline. Position 117 (G117) interacts with ATP. Residues T119, N123, and D124 each coordinate L-aspartate. Position 123 (N123) interacts with L-citrulline. L-citrulline-binding residues include R127, S175, E260, and Y272.

This sequence belongs to the argininosuccinate synthase family. Type 1 subfamily. In terms of assembly, homotetramer.

It is found in the cytoplasm. The enzyme catalyses L-citrulline + L-aspartate + ATP = 2-(N(omega)-L-arginino)succinate + AMP + diphosphate + H(+). Its pathway is amino-acid biosynthesis; L-arginine biosynthesis; L-arginine from L-ornithine and carbamoyl phosphate: step 2/3. This chain is Argininosuccinate synthase, found in Mycobacterium sp. (strain JLS).